Here is a 60-residue protein sequence, read N- to C-terminus: Large ribosomal subunit protein bL32 (60 aa).

This sequence belongs to the bacterial ribosomal protein bL32 family.

The chain is Large ribosomal subunit protein bL32 from Clostridium perfringens (strain ATCC 13124 / DSM 756 / JCM 1290 / NCIMB 6125 / NCTC 8237 / Type A).